An 87-amino-acid polypeptide reads, in one-letter code: A-agglutinin-binding subunit (87 aa).

A signal peptide spans 1–18 (MQLLRCFSIFSVIASVLA). T22 carries O-linked (Man...) threonine glycosylation. An O-linked (Man...) serine glycan is attached at S30. An O-linked (Man...) threonine glycan is attached at T32. A glycan (O-linked (Man...) serine) is linked at S39. A glycan (O-linked (Man...) threonine) is linked at T63. S66 carries O-linked (Man...) serine glycosylation. T75 is a glycosylation site (O-linked (Man...) threonine).

As to quaternary structure, heterodimer; disulfide-linked. Interacts with SAG1.

Functionally, receptor binding subunit of the a-agglutinin heterodimer. S.cerevisiae a and alpha cells express the complementary cell surface glycoproteins a-agglutinin and alpha-agglutinin, respectively, which interact with one another to promote cellular aggregation during mating. The chain is A-agglutinin-binding subunit (AGA2) from Saccharomyces cerevisiae (strain ATCC 204508 / S288c) (Baker's yeast).